Here is a 358-residue protein sequence, read N- to C-terminus: Glutamate--cysteine ligase (358 aa).

The protein belongs to the glutamate--cysteine ligase type 2 family. YbdK subfamily.

The enzyme catalyses L-cysteine + L-glutamate + ATP = gamma-L-glutamyl-L-cysteine + ADP + phosphate + H(+). Catalyzes the synthesis of gamma-glutamylcysteine (gamma-GC), the main low-molecular-weight thiol compound instead of glutathione in halophilic archaea. The polypeptide is Glutamate--cysteine ligase (Haloferax volcanii (strain ATCC 29605 / DSM 3757 / JCM 8879 / NBRC 14742 / NCIMB 2012 / VKM B-1768 / DS2) (Halobacterium volcanii)).